The sequence spans 732 residues: Polyribonucleotide nucleotidyltransferase (732 aa).

Asp489 and Asp495 together coordinate Mg(2+). Residues Pro556–Ile615 form the KH domain. Positions Gly625–Lys693 constitute an S1 motif domain. The interval Ser691–Lys732 is disordered. The segment covering Pro700–Ser716 has biased composition (basic and acidic residues). A compositionally biased stretch (polar residues) spans Asn717 to Lys732.

It belongs to the polyribonucleotide nucleotidyltransferase family. The cofactor is Mg(2+).

The protein localises to the cytoplasm. The catalysed reaction is RNA(n+1) + phosphate = RNA(n) + a ribonucleoside 5'-diphosphate. Its function is as follows. Involved in mRNA degradation. Catalyzes the phosphorolysis of single-stranded polyribonucleotides processively in the 3'- to 5'-direction. This Streptococcus uberis (strain ATCC BAA-854 / 0140J) protein is Polyribonucleotide nucleotidyltransferase.